We begin with the raw amino-acid sequence, 126 residues long: Small ribosomal subunit protein uS8 (126 aa).

Belongs to the universal ribosomal protein uS8 family. As to quaternary structure, part of the 30S ribosomal subunit. Contacts proteins S5 and S12.

In terms of biological role, one of the primary rRNA binding proteins, it binds directly to 16S rRNA central domain where it helps coordinate assembly of the platform of the 30S subunit. The polypeptide is Small ribosomal subunit protein uS8 (Nitratidesulfovibrio vulgaris (strain ATCC 29579 / DSM 644 / CCUG 34227 / NCIMB 8303 / VKM B-1760 / Hildenborough) (Desulfovibrio vulgaris)).